Reading from the N-terminus, the 969-residue chain is MEAARVGAQSRHLYGGGLGEPDMDRRDKRLFGWDLNDWRWDSDRFVATPVPAAEASGLALNSSPSSSEEAGAASVRNVNARGDSDKRKRVVVIDDDDVEDDELVENGGGSLSLRIGGDAVAHGAGVGGGADEEDRNGKKIRVQGGSPSGPACQVEGCTADLTGVRDYHRRHKVCEMHAKATTAVVGNTVQRFCQQCSRFHPLQEFDEGKRSCRRRLAGHNRRRRKTRPEVAVGGSAFTEDKISSYLLLGLLGVCANLNADNAEHLRGQELISGLLRNLGAVAKSLDPKELCKLLEACQSMQDGSNAGTSETANALVNTAVAEAAGPSNSKMPFVNGDQCGLASSSVVPVQSKSPTVATPDPPACKFKDFDLNDTYGGMEGFEDGYEGSPTPAFKTTDSPNCPSWMHQDSTQSPPQTSGNSDSTSAQSLSSSNGDAQCRTDKIVFKLFEKVPSDLPPVLRSQILGWLSSSPTDIESYIRPGCIILTVYLRLVESAWKELSDNMSSYLDKLLNSSTGNFWASGLVFVMVRHQIAFMHNGQLMLDRPLANSAHHYCKILCVRPIAAPFSTKVNFRVEGLNLVSDSSRLICSFEGSCIFQEDTDNIVDDVEHDDIEYLNFCCPLPSSRGRGFVEVEDGGFSNGFFPFIIAEQDICSEVCELESIFESSSHEQADDDNARNQALEFLNELGWLLHRANIISKQDKVPLASFNIWRFRNLGIFAMEREWCAVTKLLLDFLFTGLVDIGSQSPEEVVLSENLLHAAVRMKSAQMVRFLLGYKPNESLKRTAETFLFRPDAQGPSKFTPLHIAAATDDAEDVLDALTNDPGLVGINTWRNARDGAGFTPEDYARQRGNDAYLNMVEKKINKHLGKGHVVLGVPSSIHPVITDGVKPGEVSLEIGMTVPPPAPSCNACSRQALMYPNSTARTFLYRPAMLTVMGIAVICVCVGLLLHTCPKVYAAPTFRWELLERGPM.

Disordered regions lie at residues 1 to 25 (MEAA…DMDR) and 54 to 81 (EASG…VNAR). Residues 55–74 (ASGLALNSSPSSSEEAGAAS) show a composition bias toward low complexity. Residues 149–226 (GPACQVEGCT…AGHNRRRRKT (78 aa)) form an SBP-type zinc finger. Positions 152, 157, 174, 177, 193, 196, 200, and 212 each coordinate Zn(2+). The Bipartite nuclear localization signal motif lies at 209–225 (KRSCRRRLAGHNRRRRK). The interval 377–434 (GMEGFEDGYEGSPTPAFKTTDSPNCPSWMHQDSTQSPPQTSGNSDSTSAQSLSSSNGD) is disordered. Positions 393–419 (FKTTDSPNCPSWMHQDSTQSPPQTSGN) are enriched in polar residues. The segment covering 420–431 (SDSTSAQSLSSS) has biased composition (low complexity).

Ubiquitous.

The protein localises to the nucleus. Its function is as follows. Trans-acting factor that binds specifically to the consensus nucleotide sequence 5'-TNCGTACAA-3'. The polypeptide is Squamosa promoter-binding-like protein 6 (SPL6) (Oryza sativa subsp. japonica (Rice)).